The primary structure comprises 64 residues: Large ribosomal subunit protein bL33 (64 aa).

Belongs to the bacterial ribosomal protein bL33 family.

This is Large ribosomal subunit protein bL33 from Synechococcus sp. (strain WH7803).